Consider the following 428-residue polypeptide: tRNA(Ile2) 2-agmatinylcytidine synthetase TiaS (428 aa).

Belongs to the TiaS family.

The protein resides in the cytoplasm. It catalyses the reaction cytidine(34) in tRNA(Ile2) + agmatine + ATP + H2O = 2-agmatinylcytidine(34) in tRNA(Ile2) + AMP + 2 phosphate + 2 H(+). In terms of biological role, ATP-dependent agmatine transferase that catalyzes the formation of 2-agmatinylcytidine (agm2C) at the wobble position (C34) of tRNA(Ile2), converting the codon specificity from AUG to AUA. The sequence is that of tRNA(Ile2) 2-agmatinylcytidine synthetase TiaS from Methanosarcina mazei (strain ATCC BAA-159 / DSM 3647 / Goe1 / Go1 / JCM 11833 / OCM 88) (Methanosarcina frisia).